Here is a 229-residue protein sequence, read N- to C-terminus: Lipoprotein-releasing system ATP-binding protein LolD (229 aa).

The 221-residue stretch at 6–226 (LELKSVDRHY…TLSDGRVVEL (221 aa)) folds into the ABC transporter domain. 42–49 (APSGTGKS) is an ATP binding site.

This sequence belongs to the ABC transporter superfamily. Lipoprotein translocase (TC 3.A.1.125) family. In terms of assembly, the complex is composed of two ATP-binding proteins (LolD) and two transmembrane proteins (LolC and LolE).

The protein localises to the cell inner membrane. Its function is as follows. Part of the ABC transporter complex LolCDE involved in the translocation of mature outer membrane-directed lipoproteins, from the inner membrane to the periplasmic chaperone, LolA. Responsible for the formation of the LolA-lipoprotein complex in an ATP-dependent manner. The polypeptide is Lipoprotein-releasing system ATP-binding protein LolD (Chelativorans sp. (strain BNC1)).